We begin with the raw amino-acid sequence, 453 residues long: Zinc finger and BTB domain-containing protein 44 (453 aa).

A Glycyl lysine isopeptide (Lys-Gly) (interchain with G-Cter in SUMO2) cross-link involves residue Lys4. Residues 31–98 (CDITIRVQDK…AYTATLSINT (68 aa)) form the BTB domain. Position 135 is a phosphoserine (Ser135). The tract at residues 135 to 157 (SQPEKSLDAGQENSSNCNFTSRD) is disordered. Polar residues predominate over residues 145–157 (QENSSNCNFTSRD). A phosphoserine mark is found at Ser159, Ser161, Ser165, Ser191, Ser194, and Ser199. At Thr200 the chain carries Phosphothreonine. The interval 241 to 266 (QPEKAKQAENTRTLELPGPSEAGRRV) is disordered. A Glycyl lysine isopeptide (Lys-Gly) (interchain with G-Cter in SUMO2) cross-link involves residue Lys290. 2 disordered regions span residues 295 to 324 (SDEEVHEEVSQPVSASQSSLSDQQTVPGSE) and 336 to 366 (SSSIGSVDEGVTEGLPTLQSTSSTNAHADDD). The segment covering 304–318 (SQPVSASQSSLSDQQ) has biased composition (low complexity). The span at 352 to 361 (TLQSTSSTNA) shows a compositional bias: polar residues. C2H2-type zinc fingers lie at residues 399 to 421 (FQCPTCGVRFTRIQNLKQHMLIH) and 427 to 449 (FQCDCCGKKFTRAYSLKMHRLKH).

Its subcellular location is the nucleus. The protein is Zinc finger and BTB domain-containing protein 44 (Zbtb44) of Mus musculus (Mouse).